The primary structure comprises 260 residues: Endonuclease NucS (260 aa).

It belongs to the NucS endonuclease family.

The protein resides in the cytoplasm. In terms of biological role, cleaves both 3' and 5' ssDNA extremities of branched DNA structures. The sequence is that of Endonuclease NucS from Methanopyrus kandleri (strain AV19 / DSM 6324 / JCM 9639 / NBRC 100938).